A 104-amino-acid chain; its full sequence is L-rhamnose mutarotase (104 aa).

Tyrosine 18 contacts substrate. Histidine 22 functions as the Proton donor in the catalytic mechanism. Substrate is bound by residues tyrosine 41 and 76–77; that span reads WW.

Belongs to the rhamnose mutarotase family. Homodimer.

The protein resides in the cytoplasm. The catalysed reaction is alpha-L-rhamnose = beta-L-rhamnose. It participates in carbohydrate metabolism; L-rhamnose metabolism. Its function is as follows. Involved in the anomeric conversion of L-rhamnose. The chain is L-rhamnose mutarotase from Escherichia fergusonii (strain ATCC 35469 / DSM 13698 / CCUG 18766 / IAM 14443 / JCM 21226 / LMG 7866 / NBRC 102419 / NCTC 12128 / CDC 0568-73).